The primary structure comprises 407 residues: Inositol-tetrakisphosphate 1-kinase (407 aa).

Lys18 is a binding site for 1D-myo-inositol 1,3,4-trisphosphate. Arg106 and Lys157 together coordinate ATP. Residues 117 to 341 (EAYMQDERIC…RSKLLAEQTG (225 aa)) enclose the ATP-grasp domain. His167 and Lys199 together coordinate 1D-myo-inositol 1,3,4-trisphosphate. ATP-binding positions include 188–199 (QSFINHNAVLYK), Ser214, Ser232, and Ser236. Residues Asp281, Asp295, and Asn297 each coordinate Mg(2+). Residue Asn297 participates in 1D-myo-inositol 1,3,4-trisphosphate binding.

Belongs to the ITPK1 family. In terms of assembly, monomer. Mg(2+) is required as a cofactor.

It catalyses the reaction 1D-myo-inositol 3,4,5,6-tetrakisphosphate + ATP = 1D-myo-inositol 1,3,4,5,6-pentakisphosphate + ADP + H(+). It carries out the reaction 1D-myo-inositol 1,3,4-trisphosphate + ATP = 1D-myo-inositol 1,3,4,5-tetrakisphosphate + ADP + H(+). The enzyme catalyses 1D-myo-inositol 1,3,4-trisphosphate + ATP = 1D-myo-inositol 1,3,4,6-tetrakisphosphate + ADP + H(+). The catalysed reaction is 1D-myo-inositol 3,4,6-trisphosphate + ATP = 1D-myo-inositol 1,3,4,6-tetrakisphosphate + ADP + H(+). It catalyses the reaction 1D-myo-inositol 1,3,4-trisphosphate + 1D-myo-inositol 1,3,4,5,6-pentakisphosphate = 1D-myo-inositol 3,4,5,6-tetrakisphosphate + 1D-myo-inositol 1,3,4,6-tetrakisphosphate. It carries out the reaction 1D-myo-inositol 1,3,4-trisphosphate + 1D-myo-inositol 1,3,4,5,6-pentakisphosphate = 1D-myo-inositol 3,4,5,6-tetrakisphosphate + 1D-myo-inositol 1,3,4,5-tetrakisphosphate. In terms of biological role, kinase that can phosphorylate various inositol polyphosphate such as Ins(3,4,5,6)P4 or Ins(1,3,4)P3. Phosphorylates Ins(3,4,5,6)P4 at position 1 to form Ins(1,3,4,5,6)P5. This reaction is thought to have regulatory importance, since Ins(3,4,5,6)P4 is an inhibitor of plasma membrane Ca(2+)-activated Cl(-) channels, while Ins(1,3,4,5,6)P5 is not. Also phosphorylates Ins(1,3,4)P3 on O-5 and O-6 to form Ins(1,3,4,6)P4, an essential molecule in the hexakisphosphate (InsP6) pathway. Also acts as an inositol polyphosphate phosphatase that dephosphorylates Ins(1,3,4,5)P4 and Ins(1,3,4,6)P4 to Ins(1,3,4)P3, and Ins(1,3,4,5,6)P5 to Ins(3,4,5,6)P4. May also act as an isomerase that interconverts the inositol tetrakisphosphate isomers Ins(1,3,4,5)P4 and Ins(1,3,4,6)P4 in the presence of ADP and magnesium. Probably acts as the rate-limiting enzyme of the InsP6 pathway. Modifies TNF-alpha-induced apoptosis by interfering with the activation of TNFRSF1A-associated death domain. Plays an important role in MLKL-mediated necroptosis. Produces highly phosphorylated inositol phosphates such as inositolhexakisphosphate (InsP6) which bind to MLKL mediating the release of an N-terminal auto-inhibitory region leading to its activation. Essential for activated phospho-MLKL to oligomerize and localize to the cell membrane during necroptosis. This chain is Inositol-tetrakisphosphate 1-kinase (ITPK1), found in Gallus gallus (Chicken).